Reading from the N-terminus, the 296-residue chain is tRNA dimethylallyltransferase (296 aa).

19–26 (GPTASGKS) contacts ATP. 21–26 (TASGKS) is a binding site for substrate.

The protein belongs to the IPP transferase family. Monomer. The cofactor is Mg(2+).

The enzyme catalyses adenosine(37) in tRNA + dimethylallyl diphosphate = N(6)-dimethylallyladenosine(37) in tRNA + diphosphate. In terms of biological role, catalyzes the transfer of a dimethylallyl group onto the adenine at position 37 in tRNAs that read codons beginning with uridine, leading to the formation of N6-(dimethylallyl)adenosine (i(6)A). This Dinoroseobacter shibae (strain DSM 16493 / NCIMB 14021 / DFL 12) protein is tRNA dimethylallyltransferase.